The sequence spans 1188 residues: F-box only protein 38 (1188 aa).

The F-box domain maps to 30–75 (MNQLSHEVLCHIFRYLPLQDIMCMECLSRKLKEAVTLYLRVVRVVD). The interval 59–119 (KLKEAVTLYL…LHPRYLERRR (61 aa)) is interaction with KLF7. 3 consecutive short sequence motifs (nuclear export signal) follow at residues 194 to 201 (LHLVGVNV), 307 to 316 (LEVDLGYLII), and 451 to 460 (LLPSLEFISL). Residues 487–526 (ALVSNQNSNNDDNNAQNNNANIHDNNHHHPDDSDEENDFR) are disordered. A compositionally biased stretch (low complexity) spans 491 to 509 (NQNSNNDDNNAQNNNANIH). Phosphothreonine is present on T591. Phosphoserine is present on residues S598, S600, and S606. Disordered stretches follow at residues 620 to 666 (RRYS…FPLE), 685 to 766 (MKAA…MEEG), and 787 to 909 (RTSR…STSD). Composition is skewed to basic and acidic residues over residues 621 to 630 (RYSEREEKTG) and 685 to 699 (MKAA…KNKD). Residues 703-740 (SCSSTTASTVGNSSSHNTASQSPDFVRTVNSGGSSEPS) are compositionally biased toward polar residues. Phosphoserine is present on residues S736 and S740. A compositionally biased stretch (basic and acidic residues) spans 787–798 (RTSRCSDEERPS). Positions 849 to 861 (SSQPESCDVQSNE) are enriched in polar residues. A compositionally biased stretch (basic residues) spans 889–900 (TKPRHAMKRKRT). A Nuclear localization signal motif is present at residues 896–899 (KRKR).

As to quaternary structure, part of the SCF (SKP1-CUL1-F-box) E3 ubiquitin-protein ligase complex SCF(FBXO38) composed of CUL1, SKP1, RBX1 and FBXO38. Interacts with KLF7. Interacts with PDCD1/PD-1.

Its subcellular location is the cytoplasm. The protein resides in the cytosol. The protein localises to the nucleus. The protein operates within protein modification; protein ubiquitination. Substrate recognition component of a SCF (SKP1-CUL1-F-box protein) E3 ubiquitin-protein ligase complex which mediates the ubiquitination and subsequent proteasomal degradation of PDCD1/PD-1, thereby regulating T-cells-mediated immunity. Required for anti-tumor activity of T-cells by promoting the degradation of PDCD1/PD-1; the PDCD1-mediated inhibitory pathway being exploited by tumors to attenuate anti-tumor immunity and facilitate tumor survival. May indirectly stimulate the activity of transcription factor KLF7, a regulator of neuronal differentiation, without promoting KLF7 ubiquitination. This chain is F-box only protein 38, found in Homo sapiens (Human).